We begin with the raw amino-acid sequence, 510 residues long: UDP-N-acetylmuramoylalanine--D-glutamate ligase (510 aa).

Residue 138–144 (GTNGKTT) coordinates ATP. The interval 294-316 (FDEPAPAPRRKKDAPPPTRAGGR) is disordered.

Belongs to the MurCDEF family.

The protein localises to the cytoplasm. It carries out the reaction UDP-N-acetyl-alpha-D-muramoyl-L-alanine + D-glutamate + ATP = UDP-N-acetyl-alpha-D-muramoyl-L-alanyl-D-glutamate + ADP + phosphate + H(+). It functions in the pathway cell wall biogenesis; peptidoglycan biosynthesis. Functionally, cell wall formation. Catalyzes the addition of glutamate to the nucleotide precursor UDP-N-acetylmuramoyl-L-alanine (UMA). This Bordetella bronchiseptica (strain ATCC BAA-588 / NCTC 13252 / RB50) (Alcaligenes bronchisepticus) protein is UDP-N-acetylmuramoylalanine--D-glutamate ligase.